Reading from the N-terminus, the 272-residue chain is HMP-PP phosphatase (272 aa).

Asp8 functions as the Nucleophile in the catalytic mechanism. Residues Asp8, Asp10, and Asp212 each contribute to the Mg(2+) site.

It belongs to the HAD-like hydrolase superfamily. Cof family. The cofactor is Mg(2+).

It carries out the reaction 4-amino-2-methyl-5-(diphosphooxymethyl)pyrimidine + H2O = 4-amino-2-methyl-5-(phosphooxymethyl)pyrimidine + phosphate + H(+). Catalyzes the hydrolysis of 4-amino-2-methyl-5-hydroxymethylpyrimidine pyrophosphate (HMP-PP) to 4-amino-2-methyl-5-hydroxymethylpyrimidine phosphate (HMP-P). In Salmonella agona (strain SL483), this protein is HMP-PP phosphatase.